The primary structure comprises 339 residues: Heat-inducible transcription repressor HrcA (339 aa).

This sequence belongs to the HrcA family.

Negative regulator of class I heat shock genes (grpE-dnaK-dnaJ and groELS operons). Prevents heat-shock induction of these operons. The protein is Heat-inducible transcription repressor HrcA of Paraburkholderia phymatum (strain DSM 17167 / CIP 108236 / LMG 21445 / STM815) (Burkholderia phymatum).